The sequence spans 294 residues: 4-hydroxy-tetrahydrodipicolinate synthase (294 aa).

Threonine 47 contributes to the pyruvate binding site. The active-site Proton donor/acceptor is tyrosine 135. The active-site Schiff-base intermediate with substrate is lysine 163. Threonine 205 provides a ligand contact to pyruvate.

This sequence belongs to the DapA family. As to quaternary structure, homotetramer; dimer of dimers.

It localises to the cytoplasm. The enzyme catalyses L-aspartate 4-semialdehyde + pyruvate = (2S,4S)-4-hydroxy-2,3,4,5-tetrahydrodipicolinate + H2O + H(+). It functions in the pathway amino-acid biosynthesis; L-lysine biosynthesis via DAP pathway; (S)-tetrahydrodipicolinate from L-aspartate: step 3/4. Functionally, catalyzes the condensation of (S)-aspartate-beta-semialdehyde [(S)-ASA] and pyruvate to 4-hydroxy-tetrahydrodipicolinate (HTPA). The sequence is that of 4-hydroxy-tetrahydrodipicolinate synthase from Rickettsia montanensis.